Here is a 345-residue protein sequence, read N- to C-terminus: Phosphate acyltransferase (345 aa).

The protein belongs to the PlsX family. As to quaternary structure, homodimer. Probably interacts with PlsY.

The protein resides in the cytoplasm. It carries out the reaction a fatty acyl-[ACP] + phosphate = an acyl phosphate + holo-[ACP]. It participates in lipid metabolism; phospholipid metabolism. Its function is as follows. Catalyzes the reversible formation of acyl-phosphate (acyl-PO(4)) from acyl-[acyl-carrier-protein] (acyl-ACP). This enzyme utilizes acyl-ACP as fatty acyl donor, but not acyl-CoA. This chain is Phosphate acyltransferase, found in Chromobacterium violaceum (strain ATCC 12472 / DSM 30191 / JCM 1249 / CCUG 213 / NBRC 12614 / NCIMB 9131 / NCTC 9757 / MK).